A 154-amino-acid polypeptide reads, in one-letter code: Metallothiol transferase FosB (154 aa).

A VOC domain is found at 8–123; sequence GINHLLFSVS…DGHKFELHTG (116 aa). Residues His-11, His-70, and Glu-119 each coordinate Mg(2+). The active-site Proton donor/acceptor is the Glu-119.

It belongs to the fosfomycin resistance protein family. FosB subfamily. As to quaternary structure, homodimer. Mg(2+) serves as cofactor.

Its subcellular location is the cytoplasm. In terms of biological role, metallothiol transferase which confers resistance to fosfomycin by catalyzing the addition of a thiol cofactor to fosfomycin. L-cysteine is probably the physiological thiol donor. This chain is Metallothiol transferase FosB, found in Bacillus licheniformis (strain ATCC 14580 / DSM 13 / JCM 2505 / CCUG 7422 / NBRC 12200 / NCIMB 9375 / NCTC 10341 / NRRL NRS-1264 / Gibson 46).